The chain runs to 229 residues: Peptide methionine sulfoxide reductase B3, chloroplastic (229 aa).

The transit peptide at 1–71 (MGVQHLLKLR…NHNQWAASRC (71 aa)) directs the protein to the chloroplast. Residues 102-223 (EEEWEAILSP…NSISLKFIPA (122 aa)) enclose the MsrB domain. Zn(2+) is bound by residues Cys141, Cys144, Cys187, and Cys190. Cys159 and Cys212 are oxidised to a cystine. Cys212 acts as the Nucleophile in catalysis.

It belongs to the MsrB Met sulfoxide reductase family. Zn(2+) serves as cofactor.

It is found in the plastid. The protein localises to the chloroplast. The catalysed reaction is L-methionyl-[protein] + [thioredoxin]-disulfide + H2O = L-methionyl-(R)-S-oxide-[protein] + [thioredoxin]-dithiol. In terms of biological role, catalyzes the reduction of methionine sulfoxide (MetSO) to methionine in proteins. Plays a protective role against oxidative stress by restoring activity to proteins that have been inactivated by methionine oxidation. MSRB family specifically reduces the MetSO R-enantiomer. The sequence is that of Peptide methionine sulfoxide reductase B3, chloroplastic (MSRB3) from Oryza sativa subsp. japonica (Rice).